We begin with the raw amino-acid sequence, 384 residues long: Cobalt-precorrin-5B C(1)-methyltransferase (384 aa).

This sequence belongs to the CbiD family.

The catalysed reaction is Co-precorrin-5B + S-adenosyl-L-methionine = Co-precorrin-6A + S-adenosyl-L-homocysteine. Its pathway is cofactor biosynthesis; adenosylcobalamin biosynthesis; cob(II)yrinate a,c-diamide from sirohydrochlorin (anaerobic route): step 6/10. In terms of biological role, catalyzes the methylation of C-1 in cobalt-precorrin-5B to form cobalt-precorrin-6A. The chain is Cobalt-precorrin-5B C(1)-methyltransferase from Marinomonas sp. (strain MWYL1).